We begin with the raw amino-acid sequence, 95 residues long: MLHTLPHCASGVDFPALLRLLKEGDALLLLQDGVTVAIEGNRFLESLRDAPITVYALKEDIDARGLGGQISDSVVRVDYTEFVRLTVKYANQMAW.

It belongs to the DsrH/TusB family. In terms of assembly, heterohexamer, formed by a dimer of trimers. The hexameric TusBCD complex contains 2 copies each of TusB, TusC and TusD. The TusBCD complex interacts with TusE.

The protein resides in the cytoplasm. In terms of biological role, part of a sulfur-relay system required for 2-thiolation of 5-methylaminomethyl-2-thiouridine (mnm(5)s(2)U) at tRNA wobble positions. The chain is Protein TusB from Salmonella agona (strain SL483).